Reading from the N-terminus, the 243-residue chain is Methylthioribulose-1-phosphate dehydratase (243 aa).

Cys90 contributes to the substrate binding site. 2 residues coordinate Zn(2+): His108 and His110. Glu131 acts as the Proton donor/acceptor in catalysis. His193 lines the Zn(2+) pocket.

Belongs to the aldolase class II family. MtnB subfamily. The cofactor is Zn(2+).

Its subcellular location is the cytoplasm. The enzyme catalyses 5-(methylsulfanyl)-D-ribulose 1-phosphate = 5-methylsulfanyl-2,3-dioxopentyl phosphate + H2O. Its pathway is amino-acid biosynthesis; L-methionine biosynthesis via salvage pathway; L-methionine from S-methyl-5-thio-alpha-D-ribose 1-phosphate: step 2/6. Its function is as follows. Catalyzes the dehydration of methylthioribulose-1-phosphate (MTRu-1-P) into 2,3-diketo-5-methylthiopentyl-1-phosphate (DK-MTP-1-P). The polypeptide is Methylthioribulose-1-phosphate dehydratase (Zygosaccharomyces rouxii (strain ATCC 2623 / CBS 732 / NBRC 1130 / NCYC 568 / NRRL Y-229)).